The sequence spans 458 residues: ATP synthase subunit beta (458 aa).

Position 148 to 155 (G148 to T155) interacts with ATP.

This sequence belongs to the ATPase alpha/beta chains family. In terms of assembly, F-type ATPases have 2 components, CF(1) - the catalytic core - and CF(0) - the membrane proton channel. CF(1) has five subunits: alpha(3), beta(3), gamma(1), delta(1), epsilon(1). CF(0) has three main subunits: a(1), b(2) and c(9-12). The alpha and beta chains form an alternating ring which encloses part of the gamma chain. CF(1) is attached to CF(0) by a central stalk formed by the gamma and epsilon chains, while a peripheral stalk is formed by the delta and b chains.

Its subcellular location is the cell inner membrane. It carries out the reaction ATP + H2O + 4 H(+)(in) = ADP + phosphate + 5 H(+)(out). Its function is as follows. Produces ATP from ADP in the presence of a proton gradient across the membrane. The catalytic sites are hosted primarily by the beta subunits. The sequence is that of ATP synthase subunit beta from Pseudomonas fluorescens (strain ATCC BAA-477 / NRRL B-23932 / Pf-5).